The chain runs to 122 residues: uncharacterized protein (122 aa).

The region spanning 10-120 (VFARILRGEI…AGRRLGPMIT (111 aa)) is the HIT domain. The Histidine triad motif signature appears at 104 to 108 (HLHIH).

This is an uncharacterized protein from Azospirillum brasilense.